Here is a 328-residue protein sequence, read N- to C-terminus: 4-hydroxy-2-oxoglutarate aldolase, mitochondrial (328 aa).

Residues 1-26 constitute a mitochondrion transit peptide; sequence MFGRTLFPARVIALGSGLFRTPLRTL. A substrate-binding site is contributed by 76–77; sequence SN. Catalysis depends on Lys195, which acts as the Schiff-base intermediate with substrate. Substrate-binding residues include Ser197 and Gly221.

Belongs to the DapA family. As to quaternary structure, homotetramer.

The protein resides in the mitochondrion. It carries out the reaction (4S)-4-hydroxy-2-oxoglutarate = glyoxylate + pyruvate. The enzyme catalyses (4R)-4-hydroxy-2-oxoglutarate = glyoxylate + pyruvate. Its activity is regulated as follows. Inhibited by divalent cations. Its function is as follows. Catalyzes the final step in the metabolic pathway of hydroxyproline. In Xenopus tropicalis (Western clawed frog), this protein is 4-hydroxy-2-oxoglutarate aldolase, mitochondrial (hoga1).